Here is a 293-residue protein sequence, read N- to C-terminus: MIYVNGRYMEEKDAVLSPFDHGFLYGIGVFETFRLYEGCPFLLDWHIERLERALKDLQIEYTVSKHEILEMLDKLLKLNDIKDGNARVRLNISAGISDKGFVAQTYDKPTVLCFVNQLKPESLPLQKEGKVLSIRRNTPEGSFRLKSHHYLNNMYAKREIGNDPRVEGIFLTEDGAVAEGIISNVFWRKGRCIYTPSLDTGILDGVTRRFIIENAKDIGLELKTGRYELEALLTADEAWMTNSVLEIIPFTKIEEVNYGSQSGEATSALQLLYKKEIKNMIHEKGGRAWRSTQ.

An N6-(pyridoxal phosphate)lysine modification is found at Lys-146.

This sequence belongs to the class-IV pyridoxal-phosphate-dependent aminotransferase family. As to quaternary structure, homodimer. Pyridoxal 5'-phosphate serves as cofactor.

It catalyses the reaction 4-amino-4-deoxychorismate = 4-aminobenzoate + pyruvate + H(+). It functions in the pathway cofactor biosynthesis; tetrahydrofolate biosynthesis; 4-aminobenzoate from chorismate: step 2/2. Involved in the biosynthesis of p-aminobenzoate (PABA), a precursor of tetrahydrofolate. Converts 4-amino-4-deoxychorismate into 4-aminobenzoate (PABA) and pyruvate. In Bacillus subtilis (strain 168), this protein is Aminodeoxychorismate lyase.